We begin with the raw amino-acid sequence, 591 residues long: Eukaryotic translation initiation factor 3 subunit D (591 aa).

Residues 100–159 are disordered; the sequence is SGGNPDEDAAFRLVDGKPPPRPKFGPKWRFNPHHNRNQLPQRRDEEVEAKKRDAEKERAR. A compositionally biased stretch (basic residues) spans 123–135; that stretch reads FGPKWRFNPHHNR. The segment covering 140–159 has biased composition (basic and acidic residues); sequence QRRDEEVEAKKRDAEKERAR. Positions 309 to 323 are RNA gate; that stretch reads QLDLLSVHETSQEPL. Over residues 549–560 the composition is skewed to acidic residues; that stretch reads DYVEEPLPEDEQ. The segment at 549 to 591 is disordered; the sequence is DYVEEPLPEDEQVQPTEENTEGAEASVAATKETEEKKADDAQA. Positions 579-591 are enriched in basic and acidic residues; that stretch reads KETEEKKADDAQA.

It belongs to the eIF-3 subunit D family. In terms of assembly, component of the eukaryotic translation initiation factor 3 (eIF-3) complex, which is composed of at least 13 different subunits.

The protein localises to the cytoplasm. Functionally, mRNA cap-binding component of the eukaryotic translation initiation factor 3 (eIF-3) complex, which is involved in protein synthesis of a specialized repertoire of mRNAs and, together with other initiation factors, stimulates binding of mRNA and methionyl-tRNAi to the 40S ribosome. The eIF-3 complex specifically targets and initiates translation of a subset of mRNAs involved in cell proliferation. In the eIF-3 complex, eif3d specifically recognizes and binds the 7-methylguanosine cap of a subset of mRNAs. The sequence is that of Eukaryotic translation initiation factor 3 subunit D (TIF3D1) from Arabidopsis thaliana (Mouse-ear cress).